A 272-amino-acid chain; its full sequence is uncharacterized protein (272 aa).

Belongs to the chlamydial CPn_0389/CT_041/TC_0311 family.

This is an uncharacterized protein from Chlamydia pneumoniae (Chlamydophila pneumoniae).